Reading from the N-terminus, the 336-residue chain is Aspartate--ammonia ligase (336 aa).

It belongs to the class-II aminoacyl-tRNA synthetase family. AsnA subfamily.

It is found in the cytoplasm. It carries out the reaction L-aspartate + NH4(+) + ATP = L-asparagine + AMP + diphosphate + H(+). It functions in the pathway amino-acid biosynthesis; L-asparagine biosynthesis; L-asparagine from L-aspartate (ammonia route): step 1/1. The polypeptide is Aspartate--ammonia ligase (Limosilactobacillus reuteri (strain DSM 20016) (Lactobacillus reuteri)).